Consider the following 1043-residue polypeptide: Integrator complex subunit 3 (1043 aa).

Position 1 is an N-acetylmethionine (methionine 1). Phosphoserine is present on residues serine 502, serine 537, and serine 995. Residues 977-1043 form a disordered region; that stretch reads YEDSSTKPPK…GSSAVGSDSD (67 aa). Residues 1008–1022 show a composition bias toward acidic residues; the sequence is AEEESGSSSASEEED.

The protein belongs to the Integrator subunit 3 family. As to quaternary structure, component of the Integrator complex, composed of core subunits INTS1, INTS2, INTS3, INTS4, INTS5, INTS6, INTS7, INTS8, INTS9/RC74, INTS10, INTS11/CPSF3L, INTS12, INTS13, INTS14 and INTS15. The core complex associates with protein phosphatase 2A subunits PPP2CA and PPP2R1A, to form the Integrator-PP2A (INTAC) complex. Component of the SOSS complex, composed of SOSS-B (SOSS-B1/NABP2 or SOSS-B2/NABP1), SOSS-A/INTS3 and SOSS-C/INIP. SOSS complexes containing SOSS-B1/NABP2 are more abundant than complexes containing SOSS-B2/NABP1. Interacts with SOSS-B1/NABP2, SOSS-B2/NABP1 and SOSS-C/INIP; the interaction is direct. Interacts with NBN/NBS1.

It is found in the nucleus. Its subcellular location is the cytoplasm. Component of the integrator complex, a multiprotein complex that terminates RNA polymerase II (Pol II) transcription in the promoter-proximal region of genes. The integrator complex provides a quality checkpoint during transcription elongation by driving premature transcription termination of transcripts that are unfavorably configured for transcriptional elongation: the complex terminates transcription by (1) catalyzing dephosphorylation of the C-terminal domain (CTD) of Pol II subunit POLR2A/RPB1 and SUPT5H/SPT5, (2) degrading the exiting nascent RNA transcript via endonuclease activity and (3) promoting the release of Pol II from bound DNA. The integrator complex is also involved in terminating the synthesis of non-coding Pol II transcripts, such as enhancer RNAs (eRNAs), small nuclear RNAs (snRNAs), telomerase RNAs and long non-coding RNAs (lncRNAs). Within the integrator complex, INTS3 is involved in the post-termination step: INTS3 binds INTS7 in the open conformation of integrator complex and prevents the rebinding of Pol II to the integrator after termination cycle. Mediates recruitment of cytoplasmic dynein to the nuclear envelope, probably as component of the integrator complex. Its function is as follows. Component of the SOSS complex, a multiprotein complex that functions downstream of the MRN complex to promote DNA repair and G2/M checkpoint. The SOSS complex associates with single-stranded DNA at DNA lesions and influences diverse endpoints in the cellular DNA damage response including cell-cycle checkpoint activation, recombinational repair and maintenance of genomic stability. The SOSS complex is required for efficient homologous recombination-dependent repair of double-strand breaks (DSBs) and ATM-dependent signaling pathways. In the SOSS complex, it is required for the assembly of the complex and for stabilization of the complex at DNA damage sites. This Homo sapiens (Human) protein is Integrator complex subunit 3.